The primary structure comprises 227 residues: PKHD-type hydroxylase A1S_0473 (227 aa).

One can recognise a Fe2OG dioxygenase domain in the interval lysine 78–serine 178. Residues histidine 96, aspartate 98, and histidine 159 each coordinate Fe cation. Position 169 (arginine 169) interacts with 2-oxoglutarate.

Fe(2+) is required as a cofactor. Requires L-ascorbate as cofactor.

The protein is PKHD-type hydroxylase A1S_0473 of Acinetobacter baumannii (strain ATCC 17978 / DSM 105126 / CIP 53.77 / LMG 1025 / NCDC KC755 / 5377).